We begin with the raw amino-acid sequence, 500 residues long: Probable malate:quinone oxidoreductase (500 aa).

Belongs to the MQO family. The cofactor is FAD.

The catalysed reaction is (S)-malate + a quinone = a quinol + oxaloacetate. Its pathway is carbohydrate metabolism; tricarboxylic acid cycle; oxaloacetate from (S)-malate (quinone route): step 1/1. This is Probable malate:quinone oxidoreductase from Bacillus cereus (strain B4264).